We begin with the raw amino-acid sequence, 567 residues long: DNA ligase B (567 aa).

The N6-AMP-lysine intermediate role is filled by Lys-132.

The protein belongs to the NAD-dependent DNA ligase family. LigB subfamily.

The catalysed reaction is NAD(+) + (deoxyribonucleotide)n-3'-hydroxyl + 5'-phospho-(deoxyribonucleotide)m = (deoxyribonucleotide)n+m + AMP + beta-nicotinamide D-nucleotide.. Catalyzes the formation of phosphodiester linkages between 5'-phosphoryl and 3'-hydroxyl groups in double-stranded DNA using NAD as a coenzyme and as the energy source for the reaction. The sequence is that of DNA ligase B from Yersinia pestis bv. Antiqua (strain Angola).